A 553-amino-acid polypeptide reads, in one-letter code: Glucagon-like peptide 2 receptor (553 aa).

At 1-173 the chain is on the extracellular side; sequence MKLGSSRAGP…SFKQNVDRYA (173 aa). Cystine bridges form between cysteine 83-cysteine 105, cysteine 96-cysteine 137, and cysteine 118-cysteine 159. 4 N-linked (GlcNAc...) asparagine glycosylation sites follow: asparagine 97, asparagine 113, asparagine 148, and asparagine 162. The helical transmembrane segment at 174-198 threads the bilayer; it reads LLSTLQLMYTVGYSFSLISLFLALT. Residues 199 to 210 lie on the Cytoplasmic side of the membrane; that stretch reads LLLFLRKLHCTR. A helical transmembrane segment spans residues 211–235; the sequence is NYIHMNLFASFILRTLAVLVKDVVF. The Extracellular segment spans residues 236-261; that stretch reads YNSYSKRPDNENGWMSYLSEMSTSCR. The helical transmembrane segment at 262–285 threads the bilayer; sequence SVQVLLHYFVGANYLWLLVEGLYL. Topologically, residues 286–299 are cytoplasmic; that stretch reads HTLLEPTVLPERRL. A helical membrane pass occupies residues 300–321; sequence WPRYLLLGWAFPVLFVVPWGFA. Over 322 to 339 the chain is Extracellular; sequence RAHLENTGCWTTNGNKKI. A helical membrane pass occupies residues 340–362; sequence WWIIRGPMMLCVTVNFFIFLKIL. Residues 363 to 386 are Cytoplasmic-facing; sequence KLLISKLKAHQMCFRDYKYRLAKS. Residues 387 to 405 traverse the membrane as a helical segment; that stretch reads TLVLIPLLGVHEILFSFIT. The Extracellular segment spans residues 406 to 417; the sequence is DDQVEGFAKLIR. A helical membrane pass occupies residues 418–438; it reads LFIQLTLSSFHGFLVALQYGF. The Cytoplasmic portion of the chain corresponds to 439–550; that stretch reads ANGEVKAELR…ANTMEEILEE (112 aa).

Belongs to the G-protein coupled receptor 2 family.

Its subcellular location is the cell membrane. Functionally, this is a receptor for glucagon-like peptide 2. The activity of this receptor is mediated by G proteins which activate adenylyl cyclase. This is Glucagon-like peptide 2 receptor (GLP2R) from Homo sapiens (Human).